Here is a 502-residue protein sequence, read N- to C-terminus: Cytochrome P450 2J3 (502 aa).

Residue cysteine 448 participates in heme binding.

Belongs to the cytochrome P450 family. Requires heme as cofactor. Abundantly expressed in heart and liver.

Its subcellular location is the endoplasmic reticulum membrane. It localises to the microsome membrane. The catalysed reaction is an organic molecule + reduced [NADPH--hemoprotein reductase] + O2 = an alcohol + oxidized [NADPH--hemoprotein reductase] + H2O + H(+). This enzyme metabolizes arachidonic acid predominantly via a NADPH-dependent olefin epoxidation mainly to 14,15-, 11,12-, and 8,9-epoxyeicosatrienoic acids (EET). It also acts as an omega-1-hydroxylase by metabolizing arachidonic acid to 19-hydroxyeicosatetraenoic acid (19-OH-AA). The polypeptide is Cytochrome P450 2J3 (Cyp2j3) (Rattus norvegicus (Rat)).